A 347-amino-acid chain; its full sequence is Mediator of RNA polymerase II transcription subunit 7 (347 aa).

Disordered stretches follow at residues 97-172 and 302-326; these read GIER…TQTH and VPVG…GAEE. 2 stretches are compositionally biased toward low complexity: residues 108 to 171 and 302 to 312; these read STTT…STQT and VPVGARTGTTV.

This sequence belongs to the Mediator complex subunit 7 family. In terms of assembly, component of the Mediator complex.

Its subcellular location is the nucleus. Component of the Mediator complex, a coactivator involved in the regulated transcription of nearly all RNA polymerase II-dependent genes. Mediator functions as a bridge to convey information from gene-specific regulatory proteins to the basal RNA polymerase II transcription machinery. Mediator is recruited to promoters by direct interactions with regulatory proteins and serves as a scaffold for the assembly of a functional preinitiation complex with RNA polymerase II and the general transcription factors. This chain is Mediator of RNA polymerase II transcription subunit 7 (med-7), found in Neurospora crassa (strain ATCC 24698 / 74-OR23-1A / CBS 708.71 / DSM 1257 / FGSC 987).